The chain runs to 313 residues: MKALYWLLIGFLSSTLAEVLSSSHPAGVFDAWGIGVIFPLYSLHALVLGGWLFRLGVNWQRLFLFGCVFGMYEAYITKVLWNPYWGPDAFQFLGIYWFQFAVLVFFWHPIFAFILPLLIAEYIYTSSNTLLNAAKQFPLMQKAGKKFALLLAALAGLNQSVNTPPSMFWVALLSFFTILTPSFLLEKRKIEDIMPSGRVLKLLTFALIILYLFWTFALRFDKMGSFSGQLVVWLFYLLLFYLIINIKSCKPESKTSEKKGERRFFAACFLVYLTAFLITSSFKAFPAAMLFLLAGTAYGTIVFASILIKFLMR.

The next 9 membrane-spanning stretches (helical) occupy residues 31 to 53, 62 to 84, 104 to 126, 147 to 161, 166 to 185, 198 to 220, 225 to 244, 264 to 282, and 286 to 308; these read AWGI…GWLF, LFLF…WNPY, VFFW…IYTS, FALL…NQSV, SMFW…SFLL, RVLK…ALRF, SFSG…YLII, FFAA…TSSF, and PAAM…SILI.

It is found in the cell membrane. This is an uncharacterized protein from Archaeoglobus fulgidus (strain ATCC 49558 / DSM 4304 / JCM 9628 / NBRC 100126 / VC-16).